The chain runs to 151 residues: uncharacterized protein (151 aa).

3 consecutive transmembrane segments (helical) span residues 12–32 (LAYFIDGIIVSVPSYIILFII), 59–79 (LAFLPTMLIMIVISVLYYGLL), and 114–134 (YFAYILSGIIFYIGFIMIAFG).

It localises to the cell membrane. This is an uncharacterized protein from Bacillus subtilis (strain 168).